Here is a 631-residue protein sequence, read N- to C-terminus: Probable G-protein coupled receptor 153 (631 aa).

At 1-11 (MSDERRLPSSA) the chain is on the extracellular side. The helical transmembrane segment at 12-32 (VGWLACGGLSLLANAWGILSV) threads the bilayer. Residues 33–41 (GAKQKKWKP) lie on the Cytoplasmic side of the membrane. Residues 42–62 (LEFLLCTLAATHMLNVAVPIA) form a helical membrane-spanning segment. The Extracellular segment spans residues 63–84 (TYAVVQLRRQRPDYEWNEGLCK). A helical transmembrane segment spans residues 85 to 105 (VFVSTFYTLTLATCFSVTSIS). The Cytoplasmic portion of the chain corresponds to 106-126 (YHRMWMVRWPVNYRLSNAKKQ). The chain crosses the membrane as a helical span at residues 127 to 147 (AVHTVMGIWMVSFILSALPAV). At 148-162 (GWHDTSERFYTHGCR) the chain is on the extracellular side. The helical transmembrane segment at 163–183 (FIVAEIGLGFGVCFLLLVGGS) threads the bilayer. Residues 184-243 (VAMGMVCTAIALFQTLATQVGHRADRRTFTVPTIVVEDAQGKRRSSIDGSEPARTSLQIT) lie on the Cytoplasmic side of the membrane. Residues 244-264 (GLVATIVVIYDCLMGFPVLVV) traverse the membrane as a helical segment. Residues 265–276 (SFSSLRADASAP) are Extracellular-facing. The helical transmembrane segment at 277–297 (WMALCVLWCSVTQALLLPLFL) threads the bilayer. Residues 298–631 (WTCDRYRADL…LHSDSLGSAS (334 aa)) are Cytoplasmic-facing. Disordered regions lie at residues 486 to 518 (LQPSSLDGGPRHAQDSPPGSPRRRPGPGARSAS), 546 to 590 (QPFP…SLSA), and 603 to 631 (CGSISSFLSSPSESSGYVTLHSDSLGSAS). Residues 605–617 (SISSFLSSPSESS) show a composition bias toward low complexity.

It belongs to the G-protein coupled receptor 1 family.

It is found in the cell membrane. Functionally, orphan receptor. This is Probable G-protein coupled receptor 153 (Gpr153) from Mus musculus (Mouse).